The sequence spans 388 residues: Chorismate synthase (388 aa).

Residues R39 and R45 each coordinate NADP(+). FMN contacts are provided by residues 130–132 (RSS), 251–252 (NA), G296, 311–315 (KPIPT), and R337.

The protein belongs to the chorismate synthase family. In terms of assembly, homotetramer. Requires FMNH2 as cofactor.

The catalysed reaction is 5-O-(1-carboxyvinyl)-3-phosphoshikimate = chorismate + phosphate. It participates in metabolic intermediate biosynthesis; chorismate biosynthesis; chorismate from D-erythrose 4-phosphate and phosphoenolpyruvate: step 7/7. Catalyzes the anti-1,4-elimination of the C-3 phosphate and the C-6 proR hydrogen from 5-enolpyruvylshikimate-3-phosphate (EPSP) to yield chorismate, which is the branch point compound that serves as the starting substrate for the three terminal pathways of aromatic amino acid biosynthesis. This reaction introduces a second double bond into the aromatic ring system. The protein is Chorismate synthase of Lactococcus lactis subsp. cremoris (strain SK11).